Reading from the N-terminus, the 222-residue chain is uncharacterized protein (222 aa).

Positions 142-222 (ARRGGCVHPP…LPDPPSAGHL (81 aa)) are disordered. Residues 160-169 (QSRSISSRRA) show a composition bias toward low complexity. Basic residues predominate over residues 182-196 (PRRRPHRHRTRPQTR).

The protein belongs to the Rv1128c/1148c/1588c/1702c/1945/3466 family.

This is an uncharacterized protein from Mycobacterium tuberculosis (strain ATCC 25618 / H37Rv).